The following is a 159-amino-acid chain: MNRLSIIFPNLVMANATLPPNLAKIVERFQRHTDPKKRYEQLLWYGKKLEPMMEEGKIAANKVQGCVSQVYITADLEDGKVMYQGDSDAQLVKGLVALLIQGLNGLTPTEIVELTPDFIEATGLQVSLTPSRANGFYNIFKMMQTKAIAFQLGQSYGEG.

The protein belongs to the SufE family.

This is an uncharacterized protein from Synechocystis sp. (strain ATCC 27184 / PCC 6803 / Kazusa).